A 237-amino-acid polypeptide reads, in one-letter code: 7-carboxy-7-deazaguanine synthase (237 aa).

Residues 15 to 17 and Arg30 contribute to the substrate site; that span reads LSG. The region spanning 21–233 is the Radical SAM core domain; it reads STGIPTIFVR…IQTHKYIWGD (213 aa). [4Fe-4S] cluster is bound by residues Cys34, Cys38, and Cys48. A Mg(2+)-binding site is contributed by Thr50. Thr84 contacts substrate. Gly86 is a binding site for S-adenosyl-L-methionine.

This sequence belongs to the radical SAM superfamily. 7-carboxy-7-deazaguanine synthase family. As to quaternary structure, homodimer. Requires [4Fe-4S] cluster as cofactor. S-adenosyl-L-methionine serves as cofactor. Mg(2+) is required as a cofactor.

The enzyme catalyses 6-carboxy-5,6,7,8-tetrahydropterin + H(+) = 7-carboxy-7-deazaguanine + NH4(+). The protein operates within purine metabolism; 7-cyano-7-deazaguanine biosynthesis. Catalyzes the complex heterocyclic radical-mediated conversion of 6-carboxy-5,6,7,8-tetrahydropterin (CPH4) to 7-carboxy-7-deazaguanine (CDG), a step common to the biosynthetic pathways of all 7-deazapurine-containing compounds. The protein is 7-carboxy-7-deazaguanine synthase of Leptospira interrogans serogroup Icterohaemorrhagiae serovar Lai (strain 56601).